We begin with the raw amino-acid sequence, 145 residues long: D-aminoacyl-tRNA deacylase (145 aa).

A Gly-cisPro motif, important for rejection of L-amino acids motif is present at residues 137–138 (GP).

Belongs to the DTD family. As to quaternary structure, homodimer.

Its subcellular location is the cytoplasm. The catalysed reaction is glycyl-tRNA(Ala) + H2O = tRNA(Ala) + glycine + H(+). It catalyses the reaction a D-aminoacyl-tRNA + H2O = a tRNA + a D-alpha-amino acid + H(+). In terms of biological role, an aminoacyl-tRNA editing enzyme that deacylates mischarged D-aminoacyl-tRNAs. Also deacylates mischarged glycyl-tRNA(Ala), protecting cells against glycine mischarging by AlaRS. Acts via tRNA-based rather than protein-based catalysis; rejects L-amino acids rather than detecting D-amino acids in the active site. By recycling D-aminoacyl-tRNA to D-amino acids and free tRNA molecules, this enzyme counteracts the toxicity associated with the formation of D-aminoacyl-tRNA entities in vivo and helps enforce protein L-homochirality. In Sodalis glossinidius (strain morsitans), this protein is D-aminoacyl-tRNA deacylase.